Here is an 86-residue protein sequence, read N- to C-terminus: Large ribosomal subunit protein bL31m (86 aa).

Residues 1-18 constitute a mitochondrion transit peptide; it reads MKCSLRLFEKAGRLSVRS.

Belongs to the bacterial ribosomal protein bL31 family. Highly divergent. As to quaternary structure, component of the mitochondrial large ribosomal subunit (mt-LSU). Mature yeast 74S mitochondrial ribosomes consist of a small (37S) and a large (54S) subunit. The 37S small subunit contains a 15S ribosomal RNA (15S mt-rRNA) and at least 32 different proteins. The 54S large subunit contains a 21S rRNA (21S mt-rRNA) and at least 45 different proteins.

Its subcellular location is the mitochondrion. Its function is as follows. Component of the mitochondrial ribosome (mitoribosome), a dedicated translation machinery responsible for the synthesis of mitochondrial genome-encoded proteins, including at least some of the essential transmembrane subunits of the mitochondrial respiratory chain. The mitoribosomes are attached to the mitochondrial inner membrane and translation products are cotranslationally integrated into the membrane. The protein is Large ribosomal subunit protein bL31m (tam9) of Schizosaccharomyces pombe (strain 972 / ATCC 24843) (Fission yeast).